Here is a 289-residue protein sequence, read N- to C-terminus: Inorganic pyrophosphatase (289 aa).

Arg80 lines the diphosphate pocket. Residues Asp117, Asp122, and Asp154 each coordinate Mg(2+).

This sequence belongs to the PPase family. In terms of assembly, homodimer. Requires Mg(2+) as cofactor.

The protein localises to the cytoplasm. It catalyses the reaction diphosphate + H2O = 2 phosphate + H(+). This chain is Inorganic pyrophosphatase (ppa1), found in Schizosaccharomyces pombe (strain 972 / ATCC 24843) (Fission yeast).